Consider the following 245-residue polypeptide: Probable transcriptional regulatory protein MARTH_orf271 (245 aa).

This sequence belongs to the TACO1 family.

The protein resides in the cytoplasm. The polypeptide is Probable transcriptional regulatory protein MARTH_orf271 (Metamycoplasma arthritidis (strain 158L3-1) (Mycoplasma arthritidis)).